The chain runs to 597 residues: Fructan 1-exohydrolase (597 aa).

An N-terminal signal peptide occupies residues 1–15 (MAQAWAFLLPVLVFG). The active site involves aspartate 76. Residues asparagine 169, asparagine 237, and asparagine 249 are each glycosylated (N-linked (GlcNAc...) asparagine). Cysteine 447 and cysteine 493 are joined by a disulfide. Asparagine 568 is a glycosylation site (N-linked (GlcNAc...) asparagine).

The protein belongs to the glycosyl hydrolase 32 family.

The enzyme catalyses Hydrolysis of terminal, non-reducing (2-&gt;1)-linked beta-D-fructofuranose residues in fructans.. Inhibited by sucrose. Its function is as follows. Hydrolyzes inulin-type beta-(2,1)-fructans. May play a role as a beta-(2,1)-trimmer during graminan biosynthesis. This Triticum urartu (Red wild einkorn) protein is Fructan 1-exohydrolase.